A 214-amino-acid chain; its full sequence is uncharacterized protein (214 aa).

The first 18 residues, 1–18 (MTMYIGLILVVLATFCQG), serve as a signal peptide directing secretion. Asparagine 64 carries N-linked (GlcNAc...) asparagine; by host glycosylation.

This is an uncharacterized protein from Magallana gigas (Pacific oyster).